Here is a 184-residue protein sequence, read N- to C-terminus: Ribosome-recycling factor (184 aa).

This sequence belongs to the RRF family.

The protein localises to the cytoplasm. Functionally, responsible for the release of ribosomes from messenger RNA at the termination of protein biosynthesis. May increase the efficiency of translation by recycling ribosomes from one round of translation to another. The protein is Ribosome-recycling factor of Clostridium botulinum (strain ATCC 19397 / Type A).